The primary structure comprises 68 residues: DNA-directed RNA polymerase subunit omega (68 aa).

This sequence belongs to the RNA polymerase subunit omega family. The RNAP catalytic core consists of 2 alpha, 1 beta, 1 beta' and 1 omega subunit. When a sigma factor is associated with the core the holoenzyme is formed, which can initiate transcription.

The enzyme catalyses RNA(n) + a ribonucleoside 5'-triphosphate = RNA(n+1) + diphosphate. Its function is as follows. Promotes RNA polymerase assembly. Latches the N- and C-terminal regions of the beta' subunit thereby facilitating its interaction with the beta and alpha subunits. The chain is DNA-directed RNA polymerase subunit omega from Persephonella marina (strain DSM 14350 / EX-H1).